The chain runs to 392 residues: Methylthioribose-1-phosphate isomerase (392 aa).

Catalysis depends on Asp267, which acts as the Proton donor.

Belongs to the eIF-2B alpha/beta/delta subunits family. MtnA subfamily.

It localises to the cytoplasm. The protein resides in the nucleus. The enzyme catalyses 5-(methylsulfanyl)-alpha-D-ribose 1-phosphate = 5-(methylsulfanyl)-D-ribulose 1-phosphate. It participates in amino-acid biosynthesis; L-methionine biosynthesis via salvage pathway; L-methionine from S-methyl-5-thio-alpha-D-ribose 1-phosphate: step 1/6. Its function is as follows. Catalyzes the interconversion of methylthioribose-1-phosphate (MTR-1-P) into methylthioribulose-1-phosphate (MTRu-1-P). In Ajellomyces dermatitidis (strain ER-3 / ATCC MYA-2586) (Blastomyces dermatitidis), this protein is Methylthioribose-1-phosphate isomerase.